The following is a 434-amino-acid chain: Cytochrome b-c1 complex subunit 2, mitochondrial (434 aa).

The N-terminal 31 residues, 1–31 (MYSLNRLPRSAAFKSSANLLRRNASTTSAGG), are a transit peptide targeting the mitochondrion.

This sequence belongs to the peptidase M16 family. UQCRC2/QCR2 subfamily. Component of the ubiquinol-cytochrome c oxidoreductase (cytochrome b-c1 complex, complex III, CIII), a multisubunit enzyme composed of 10 subunits. The complex is composed of 3 respiratory subunits cytochrome b (COB), cytochrome c1 (CYT1) and Rieske protein (RIP1), 2 core protein subunits COR1 and QCR2, and 5 low-molecular weight protein subunits QCR6, QCR7, QCR8, QCR9 and QCR10. The complex exists as an obligatory dimer and forms supercomplexes (SCs) in the inner mitochondrial membrane with a monomer or a dimer of cytochrome c oxidase (complex IV, CIV), resulting in 2 different assemblies (supercomplexes III(2)IV and III(2)IV(2)). Interacts with MRJ1.

Its subcellular location is the mitochondrion inner membrane. Its function is as follows. Component of the ubiquinol-cytochrome c oxidoreductase, a multisubunit transmembrane complex that is part of the mitochondrial electron transport chain which drives oxidative phosphorylation. The respiratory chain contains 3 multisubunit complexes succinate dehydrogenase (complex II, CII), ubiquinol-cytochrome c oxidoreductase (cytochrome b-c1 complex, complex III, CIII) and cytochrome c oxidase (complex IV, CIV), that cooperate to transfer electrons derived from NADH and succinate to molecular oxygen, creating an electrochemical gradient over the inner membrane that drives transmembrane transport and the ATP synthase. The cytochrome b-c1 complex catalyzes electron transfer from ubiquinol to cytochrome c, linking this redox reaction to translocation of protons across the mitochondrial inner membrane, with protons being carried across the membrane as hydrogens on the quinol. In the process called Q cycle, 2 protons are consumed from the matrix, 4 protons are released into the intermembrane space and 2 electrons are passed to cytochrome c. In Cryptococcus neoformans var. grubii serotype A (strain H99 / ATCC 208821 / CBS 10515 / FGSC 9487) (Filobasidiella neoformans var. grubii), this protein is Cytochrome b-c1 complex subunit 2, mitochondrial.